The sequence spans 546 residues: Glutamate--tRNA ligase (546 aa).

The 'HIGH' region signature appears at 42-52; that stretch reads PSPTGFIHLGN. The 'KMSKS' region signature appears at 293 to 297; it reads KLSKR. K296 is an ATP binding site.

This sequence belongs to the class-I aminoacyl-tRNA synthetase family. Glutamate--tRNA ligase type 1 subfamily. In terms of assembly, monomer.

The protein localises to the cytoplasm. The catalysed reaction is tRNA(Glu) + L-glutamate + ATP = L-glutamyl-tRNA(Glu) + AMP + diphosphate. In terms of biological role, catalyzes the attachment of glutamate to tRNA(Glu) in a two-step reaction: glutamate is first activated by ATP to form Glu-AMP and then transferred to the acceptor end of tRNA(Glu). The polypeptide is Glutamate--tRNA ligase (Acetivibrio thermocellus (strain ATCC 27405 / DSM 1237 / JCM 9322 / NBRC 103400 / NCIMB 10682 / NRRL B-4536 / VPI 7372) (Clostridium thermocellum)).